The primary structure comprises 285 residues: Acetyl-coenzyme A carboxylase carboxyl transferase subunit beta (285 aa).

A CoA carboxyltransferase N-terminal domain is found at 33 to 285 (MWIKCSKCGK…TLGNILRMHS (253 aa)). The Zn(2+) site is built by Cys-37, Cys-40, Cys-56, and Cys-59. The C4-type zinc-finger motif lies at 37-59 (CSKCGKILYKSDVDDNFKVCPKC).

It belongs to the AccD/PCCB family. In terms of assembly, acetyl-CoA carboxylase is a heterohexamer composed of biotin carboxyl carrier protein (AccB), biotin carboxylase (AccC) and two subunits each of ACCase subunit alpha (AccA) and ACCase subunit beta (AccD). Zn(2+) serves as cofactor.

It is found in the cytoplasm. The enzyme catalyses N(6)-carboxybiotinyl-L-lysyl-[protein] + acetyl-CoA = N(6)-biotinyl-L-lysyl-[protein] + malonyl-CoA. It functions in the pathway lipid metabolism; malonyl-CoA biosynthesis; malonyl-CoA from acetyl-CoA: step 1/1. Component of the acetyl coenzyme A carboxylase (ACC) complex. Biotin carboxylase (BC) catalyzes the carboxylation of biotin on its carrier protein (BCCP) and then the CO(2) group is transferred by the transcarboxylase to acetyl-CoA to form malonyl-CoA. The protein is Acetyl-coenzyme A carboxylase carboxyl transferase subunit beta of Clostridium acetobutylicum (strain ATCC 824 / DSM 792 / JCM 1419 / IAM 19013 / LMG 5710 / NBRC 13948 / NRRL B-527 / VKM B-1787 / 2291 / W).